A 973-amino-acid polypeptide reads, in one-letter code: DNA repair protein rhp26 (973 aa).

Residues 35–107 are a coiled coil; that stretch reads ESREIEKKRL…DIKRRLNNED (73 aa). The disordered stretch occupies residues 230–251; that stretch reads RDQASASENNKDRGEFEGKDEW. Positions 238-251 are enriched in basic and acidic residues; the sequence is NNKDRGEFEGKDEW. The region spanning 289 to 490 is the Helicase ATP-binding domain; sequence WELYCQEAGG…WNLFDFVFPG (202 aa). Residue 302-309 coordinates ATP; the sequence is DEMGLGKT. The tract at residues 367–386 is disordered; the sequence is SREKRQYESDASESEAEESK. The DEAH box motif lies at 441-444; that stretch reads DEGH. A Helicase C-terminal domain is found at 629-789; that stretch reads VIRALLTLWK…RRFFKMTDLH (161 aa). Disordered regions lie at residues 803–846, 863–882, and 930–973; these read ETGS…KGKK, KYKPPQESNVTKTNSDSTLG, and AVSS…KQRR. The span at 834–846 shows a compositional bias: basic residues; that stretch reads DRKKHKIHDKGKK. Composition is skewed to polar residues over residues 868–882 and 947–965; these read QESNVTKTNSDSTLG and STNVPGTSKPSGPITSSTL.

The protein resides in the cytoplasm. Its subcellular location is the nucleus. Involved in transcription-coupled repair (TCR). The sequence is that of DNA repair protein rhp26 (rhp26) from Schizosaccharomyces pombe (strain 972 / ATCC 24843) (Fission yeast).